A 342-amino-acid chain; its full sequence is uncharacterized protein (342 aa).

It belongs to the cycloisomerase 2 family.

This is an uncharacterized protein from Staphylococcus epidermidis (strain ATCC 12228 / FDA PCI 1200).